A 461-amino-acid chain; its full sequence is Porin AaxA (461 aa).

The N-terminal stretch at Met-1 to Ala-22 is a signal peptide.

It belongs to the OprB family.

It localises to the cell outer membrane. Functionally, facilitates L-arginine uptake, as part of the AaxABC system. The arginine uptake by the bacterium in the macrophage may be a virulence factor against the host innate immune response. The protein is Porin AaxA (aaxA) of Chlamydia trachomatis serovar A (strain ATCC VR-571B / DSM 19440 / HAR-13).